Reading from the N-terminus, the 279-residue chain is Energy-coupling factor transporter ATP-binding protein EcfA1 (279 aa).

Residues 6 to 240 (ISVDHLTYQY…GTQLVEMGLD (235 aa)) form the ABC transporter domain. 40-47 (GHNGSGKS) lines the ATP pocket.

The protein belongs to the ABC transporter superfamily. Energy-coupling factor EcfA family. In terms of assembly, forms a stable energy-coupling factor (ECF) transporter complex composed of 2 membrane-embedded substrate-binding proteins (S component), 2 ATP-binding proteins (A component) and 2 transmembrane proteins (T component).

The protein localises to the cell membrane. Its function is as follows. ATP-binding (A) component of a common energy-coupling factor (ECF) ABC-transporter complex. Unlike classic ABC transporters this ECF transporter provides the energy necessary to transport a number of different substrates. This is Energy-coupling factor transporter ATP-binding protein EcfA1 from Levilactobacillus brevis (strain ATCC 367 / BCRC 12310 / CIP 105137 / JCM 1170 / LMG 11437 / NCIMB 947 / NCTC 947) (Lactobacillus brevis).